A 602-amino-acid polypeptide reads, in one-letter code: MSRLKRIAGQDPRAGFKAAGRDCGTSVPQGLLKAARKSGQLNLSGRNLSEVPQCVWRINVDIPEEANQNLSFGATERWWEQTDLTKLIISNNKLQSLTDDLRLLPALTVLDIHDNQLTSLPSAMRELENLQKLNVSHNKLKIFPEEITNLRNLKCLYLQHNELTCISEGFEQLSNLEDLDLSNNRLTTVPASFSSLSSLVRLNLSSNQLKSLPAEINRMKRLKHLDCNSNLLETIPPELAGMESLELLYLRRNKLRFLPEFPSCSLLKELHVGENQIEMLEAEHLKHLNSILVLDLRDNKLKSVPDEIILLQSLERLDLSNNDISSLPYSLGNLHLKFLALEGNPLRTIRREIINKGTQEVLKYLRSKIKDDGPSQSESAAETAMTLPSESRVNIHAIITLKILDYSDKQATLIPDEVFNAVKSNIITSINFSKNQLCEIPKRMVELKEMVSDVNLSFNKLSFISLELCMLQKLTFLDLRNNFLNSLPEEMESLVRLQTINLSFNRFKMLPEVLYRIFTLETILISNNQVGSVDPQKMKMMENLTTLDLQNNDLLQIPPELGNCVNLRTLLLDGNPFRVPRAAILIKGTAAILEYLRDRIPT.

The disordered stretch occupies residues 1 to 20; that stretch reads MSRLKRIAGQDPRAGFKAAG. Phosphoserine is present on serine 71. 20 LRR repeats span residues 83 to 104, 106 to 127, 129 to 150, 152 to 173, 175 to 196, 198 to 219, 221 to 242, 244 to 265, 266 to 286, 290 to 311, 313 to 335, 336 to 356, 400 to 421, 426 to 447, 450 to 471, 473 to 494, 496 to 517, 519 to 540, 543 to 564, and 566 to 586; these read DLTK…LRLL, ALTV…MREL, NLQK…ITNL, NLKC…FEQL, NLED…FSSL, SLVR…INRM, RLKH…LAGM, SLEL…PSCS, LLKE…EHLK, SILV…IILL, SLER…GNLH, LKFL…IINK, TLKI…VFNA, IITS…MVEL, MVSD…LCML, KLTF…MESL, RLQT…LYRI, TLET…KMKM, NLTT…LGNC, and NLRT…AILI.

The protein is Leucine-rich repeat-containing protein 40 (LRRC40) of Macaca fascicularis (Crab-eating macaque).